We begin with the raw amino-acid sequence, 308 residues long: Testis-specific Y-encoded protein 1 (308 aa).

The protein belongs to the nucleosome assembly protein (NAP) family. Phosphorylated. Specifically expressed in testicular tissues. Isoform 1 and isoform 2 are expressed in spermatogonia and spermatocytes. Found in early testicular carcinoma in situ, spermatogonial cells in testicular tissues of 46,X,Y female and in prostate cancer cell lines.

It is found in the cytoplasm. The protein resides in the nucleus. In terms of biological role, may be involved in sperm differentiation and proliferation. The polypeptide is Testis-specific Y-encoded protein 1 (TSPY1) (Homo sapiens (Human)).